The primary structure comprises 401 residues: Glutamyl-tRNA reductase (401 aa).

Substrate contacts are provided by residues 45 to 48, serine 101, 106 to 108, and glutamine 112; these read TCNR and EDQ. Cysteine 46 serves as the catalytic Nucleophile. Position 177–182 (177–182) interacts with NADP(+); it reads GYGEVG.

Belongs to the glutamyl-tRNA reductase family. Homodimer.

It catalyses the reaction (S)-4-amino-5-oxopentanoate + tRNA(Glu) + NADP(+) = L-glutamyl-tRNA(Glu) + NADPH + H(+). The protein operates within porphyrin-containing compound metabolism; protoporphyrin-IX biosynthesis; 5-aminolevulinate from L-glutamyl-tRNA(Glu): step 1/2. Its function is as follows. Catalyzes the NADPH-dependent reduction of glutamyl-tRNA(Glu) to glutamate 1-semialdehyde (GSA). The chain is Glutamyl-tRNA reductase from Clostridium beijerinckii (strain ATCC 51743 / NCIMB 8052) (Clostridium acetobutylicum).